The sequence spans 311 residues: tRNA pseudouridine synthase B (311 aa).

D49 (nucleophile) is an active-site residue.

Belongs to the pseudouridine synthase TruB family. Type 1 subfamily.

It catalyses the reaction uridine(55) in tRNA = pseudouridine(55) in tRNA. In terms of biological role, responsible for synthesis of pseudouridine from uracil-55 in the psi GC loop of transfer RNAs. The chain is tRNA pseudouridine synthase B from Rhizobium meliloti (strain 1021) (Ensifer meliloti).